We begin with the raw amino-acid sequence, 960 residues long: Phosphoenolpyruvate carboxylase 1 (960 aa).

S7 bears the Phosphoserine mark. Catalysis depends on residues H168 and K596.

It belongs to the PEPCase type 1 family. In terms of assembly, homotetramer. It depends on Mg(2+) as a cofactor.

The protein localises to the cytoplasm. The enzyme catalyses oxaloacetate + phosphate = phosphoenolpyruvate + hydrogencarbonate. The protein operates within photosynthesis; C3 acid pathway. With respect to regulation, by light-reversible phosphorylation. Through the carboxylation of phosphoenolpyruvate (PEP) it forms oxaloacetate, a four-carbon dicarboxylic acid source for the tricarboxylic acid cycle. This Sorghum bicolor (Sorghum) protein is Phosphoenolpyruvate carboxylase 1 (PEPC).